Here is a 1023-residue protein sequence, read N- to C-terminus: 2-oxoglutarate dehydrogenase complex component E1 (1023 aa).

A mitochondrion-targeting transit peptide spans 1–40 (MFHLRTCAAKLRPLTASQTVKTFSQNKPAAIRTFQQIRCY). Residue Lys74 is modified to N6-succinyllysine. The residue at position 100 (Ser100) is a Phosphoserine. Ca(2+) contacts are provided by His143, Asp156, and Asp158. Thiamine diphosphate is bound at residue Arg312. Lys401 is modified (N6-acetyllysine). Residues Asp411, Asn444, and Ile446 each contribute to the thiamine diphosphate site. Positions 411, 444, and 446 each coordinate Mg(2+). A Glycyl lysine isopeptide (Lys-Gly) (interchain with G-Cter in ubiquitin) cross-link involves residue Lys534. Lys564 bears the N6-succinyllysine mark. A thiamine diphosphate-binding site is contributed by Gln676. Residues 933-939 (LSPFPFD) form a recognized by alloreactive CD8 cytotoxic T-lymphocytes in association with a class I MHC protein region. The residue at position 970 (Lys970) is an N6-acetyllysine.

Belongs to the alpha-ketoglutarate dehydrogenase family. As to quaternary structure, homodimer. The 2-oxoglutarate dehydrogenase complex is composed of OGDH (2-oxoglutarate dehydrogenase; E1), DLST (dihydrolipoamide succinyltransferase; E2), DLD (dihydrolipoamide dehydrogenase; E3) and the assembly factor KGD4. It contains multiple copies of the three enzymatic components (E1, E2 and E3). In the nucleus, the 2-oxoglutarate dehydrogenase complex associates with KAT2A. Interacts with ABHD11; this interaction maintains the functional lipoylation of the 2-oxoglutarate dehydrogenase complex. Thiamine diphosphate is required as a cofactor. It depends on Mg(2+) as a cofactor.

The protein resides in the mitochondrion. It is found in the nucleus. The catalysed reaction is N(6)-[(R)-lipoyl]-L-lysyl-[protein] + 2-oxoglutarate + H(+) = N(6)-[(R)-S(8)-succinyldihydrolipoyl]-L-lysyl-[protein] + CO2. With respect to regulation, calcium ions and ADP stimulate, whereas ATP and NADH reduce catalytic activity. In terms of biological role, 2-oxoglutarate dehydrogenase (E1o) component of the 2-oxoglutarate dehydrogenase complex (OGDHC). Participates in the first step, rate limiting for the overall conversion of 2-oxoglutarate to succinyl-CoA and CO(2) catalyzed by the whole OGDHC. Catalyzes the irreversible decarboxylation of 2-oxoglutarate (alpha-ketoglutarate) via the thiamine diphosphate (ThDP) cofactor and subsequent transfer of the decarboxylated acyl intermediate on an oxidized dihydrolipoyl group that is covalently amidated to the E2 enzyme (dihydrolipoyllysine-residue succinyltransferase or DLST). Plays a key role in the Krebs (citric acid) cycle, which is a common pathway for oxidation of fuel molecules, including carbohydrates, fatty acids, and amino acids. Can catalyze the decarboxylation of 2-oxoadipate in vitro, but at a much lower rate than 2-oxoglutarate. Mainly active in the mitochondrion. A fraction of the 2-oxoglutarate dehydrogenase complex also localizes in the nucleus and is required for lysine succinylation of histones: associates with KAT2A on chromatin and provides succinyl-CoA to histone succinyltransferase KAT2A. The polypeptide is 2-oxoglutarate dehydrogenase complex component E1 (Mus musculus (Mouse)).